The following is a 398-amino-acid chain: Tryptophan synthase beta chain (398 aa).

Lys92 is modified (N6-(pyridoxal phosphate)lysine).

Belongs to the TrpB family. In terms of assembly, tetramer of two alpha and two beta chains. Requires pyridoxal 5'-phosphate as cofactor.

It catalyses the reaction (1S,2R)-1-C-(indol-3-yl)glycerol 3-phosphate + L-serine = D-glyceraldehyde 3-phosphate + L-tryptophan + H2O. It participates in amino-acid biosynthesis; L-tryptophan biosynthesis; L-tryptophan from chorismate: step 5/5. The beta subunit is responsible for the synthesis of L-tryptophan from indole and L-serine. This Nitrosospira multiformis (strain ATCC 25196 / NCIMB 11849 / C 71) protein is Tryptophan synthase beta chain.